The primary structure comprises 516 residues: Ribonuclease Y (516 aa).

The chain crosses the membrane as a helical span at residues 1–21 (MLIKIVIACVITAIIVALIAW). One can recognise a KH domain in the interval 206–269 (TISVVQLPND…ETARIALEKL (64 aa)). In terms of domain architecture, HD spans 332–425 (ALKHSIEVAI…VQAADTISAA (94 aa)).

This sequence belongs to the RNase Y family.

The protein localises to the cell membrane. Endoribonuclease that initiates mRNA decay. The polypeptide is Ribonuclease Y (Lachnoclostridium phytofermentans (strain ATCC 700394 / DSM 18823 / ISDg) (Clostridium phytofermentans)).